A 592-amino-acid polypeptide reads, in one-letter code: Insulin-like growth factor 2 mRNA-binding protein 2 (592 aa).

RRM domains are found at residues 3 to 76 and 82 to 157; these read NKLY…YSVS and RRIQ…YIPD. Ser11 carries the phosphoserine modification. The interval 157–182 is disordered; the sequence is DEEVSSPSPPHRAREQGHGPGSSSQA. 2 positions are modified to phosphoserine: Ser162 and Ser164. KH domains lie at 186 to 251, 267 to 334, 420 to 485, and 502 to 568; these read DFPL…CRMI, EVPL…EIEI, QETV…QGRI, and KLEA…QRKI. Position 543 is a phosphothreonine (Thr543).

The protein belongs to the RRM IMP/VICKZ family. As to quaternary structure, can form homooligomers and heterooligomers with IGF2BP1 and IGF2BP3 in an RNA-dependent manner. Interacts with HNRPD. Interacts with IGF2BP1. Interacts with ELAVL1, DHX9, HNRNPU, MATR3 and PABPC1. Expressed in oocytes, granulosa cells of small and growing follicles and Leydig cells of the testis (at protein level). Expressed in testis and ovary.

The protein localises to the nucleus. It localises to the cytoplasm. Its subcellular location is the P-body. It is found in the stress granule. Functionally, RNA-binding factor that recruits target transcripts to cytoplasmic protein-RNA complexes (mRNPs). This transcript 'caging' into mRNPs allows mRNA transport and transient storage. It also modulates the rate and location at which target transcripts encounter the translational apparatus and shields them from endonuclease attacks or microRNA-mediated degradation. Preferentially binds to N6-methyladenosine (m6A)-containing mRNAs and increases their stability. Binds to the 5'-UTR of the insulin-like growth factor 2 (IGF2) mRNAs. Binding is isoform-specific. Binds to beta-actin/ACTB and MYC transcripts. Increases MYC mRNA stability by binding to the coding region instability determinant (CRD) and binding is enhanced by m6A-modification of the CRD. The sequence is that of Insulin-like growth factor 2 mRNA-binding protein 2 (Igf2bp2) from Mus musculus (Mouse).